The following is a 152-amino-acid chain: Synaptobrevin (152 aa).

Positions 1–16 (MENNEAPSPSGSNNND) are enriched in polar residues. The interval 1-30 (MENNEAPSPSGSNNNDFPILPPPPNANDNY) is disordered. Residues 1-110 (MENNEAPSPS…KRKQWWANMK (110 aa)) lie on the Cytoplasmic side of the membrane. Residues 47 to 107 (KLQQTQAKVD…GKLKRKQWWA (61 aa)) enclose the v-SNARE coiled-coil homology domain. The chain crosses the membrane as a helical; Anchor for type IV membrane protein span at residues 111-130 (MMIILGVIAVVLLIIVLVSV). Over 131-152 (WPSSSDSGSGGGNKAITQAPPH) the chain is Vesicular. Residues 133–152 (SSSDSGSGGGNKAITQAPPH) form a disordered region.

The protein belongs to the synaptobrevin family. As to quaternary structure, part of the SNARE core complex containing Snap25 and syntaxin. Post-translationally, ubiquitinated by gzl, regulating endocytic trafficking. In wing imaginal disks, ubiquitination by gzl promotes transcytosis of wingless (wg) to the basolateral surface. In terms of tissue distribution, not nervous system-specific; abundant in cells of the gut and Malpighian tubules.

It localises to the cytoplasmic vesicle. It is found in the secretory vesicle. The protein localises to the synaptic vesicle membrane. Its subcellular location is the cell membrane. Its function is as follows. Involved in the targeting and/or fusion of transport vesicles to their target membrane. This is Synaptobrevin from Drosophila melanogaster (Fruit fly).